Here is a 493-residue protein sequence, read N- to C-terminus: Transcript termination protein A18 (493 aa).

Positions 100–256 constitute a Helicase ATP-binding domain; the sequence is MIELKRPLYI…NSIINIAKLS (157 aa). ATP is bound at residue 113 to 120; it reads LACGFGKT. Residues 206–209 carry the DESH box motif; the sequence is DESH. Residues 309–456 enclose the Helicase C-terminal domain; the sequence is ILDTLVEEFK…IISLSVDKLG (148 aa).

Belongs to the helicase family. Poxviruses subfamily. As to quaternary structure, interacts with G2. Might be part of a transcription complex composed at least of G2, A18, and H5.

It localises to the virion. DNA helicase which seems to act as a postreplicative transcription termination factor. Involved in ATP-dependent release of nascent RNA. Forms a stable complex with single-stranded DNA, and to a lesser extent RNA. The protein is Transcript termination protein A18 of Mus musculus (Mouse).